The sequence spans 276 residues: Large ribosomal subunit protein uL2 (276 aa).

A disordered region spans residues 211–276 (RNRHRGIRPQ…KLIISRRKGK (66 aa)). Residues 230–240 (DHPHGGGEGKK) show a composition bias toward basic and acidic residues.

It belongs to the universal ribosomal protein uL2 family. Part of the 50S ribosomal subunit. Forms a bridge to the 30S subunit in the 70S ribosome.

Its function is as follows. One of the primary rRNA binding proteins. Required for association of the 30S and 50S subunits to form the 70S ribosome, for tRNA binding and peptide bond formation. It has been suggested to have peptidyltransferase activity; this is somewhat controversial. Makes several contacts with the 16S rRNA in the 70S ribosome. The polypeptide is Large ribosomal subunit protein uL2 (Campylobacter jejuni subsp. doylei (strain ATCC BAA-1458 / RM4099 / 269.97)).